Here is a 355-residue protein sequence, read N- to C-terminus: Holliday junction branch migration complex subunit RuvB (355 aa).

Residues 1 to 193 (MGRFSEDSAD…FGFTAHMDFY (193 aa)) form a large ATPase domain (RuvB-L) region. ATP-binding positions include leucine 32, arginine 33, glycine 74, lysine 77, threonine 78, serine 79, 140 to 142 (EDF), arginine 183, tyrosine 193, and arginine 230. Threonine 78 lines the Mg(2+) pocket. The small ATPAse domain (RuvB-S) stretch occupies residues 194 to 264 (EPSELERVLA…IAKYALEVYD (71 aa)). A head domain (RuvB-H) region spans residues 267–355 (ELGLDRLDRA…VGLGQTGLFD (89 aa)). Residues arginine 322 and arginine 327 each contribute to the DNA site.

The protein belongs to the RuvB family. Homohexamer. Forms an RuvA(8)-RuvB(12)-Holliday junction (HJ) complex. HJ DNA is sandwiched between 2 RuvA tetramers; dsDNA enters through RuvA and exits via RuvB. An RuvB hexamer assembles on each DNA strand where it exits the tetramer. Each RuvB hexamer is contacted by two RuvA subunits (via domain III) on 2 adjacent RuvB subunits; this complex drives branch migration. In the full resolvosome a probable DNA-RuvA(4)-RuvB(12)-RuvC(2) complex forms which resolves the HJ.

The protein resides in the cytoplasm. The catalysed reaction is ATP + H2O = ADP + phosphate + H(+). In terms of biological role, the RuvA-RuvB-RuvC complex processes Holliday junction (HJ) DNA during genetic recombination and DNA repair, while the RuvA-RuvB complex plays an important role in the rescue of blocked DNA replication forks via replication fork reversal (RFR). RuvA specifically binds to HJ cruciform DNA, conferring on it an open structure. The RuvB hexamer acts as an ATP-dependent pump, pulling dsDNA into and through the RuvAB complex. RuvB forms 2 homohexamers on either side of HJ DNA bound by 1 or 2 RuvA tetramers; 4 subunits per hexamer contact DNA at a time. Coordinated motions by a converter formed by DNA-disengaged RuvB subunits stimulates ATP hydrolysis and nucleotide exchange. Immobilization of the converter enables RuvB to convert the ATP-contained energy into a lever motion, pulling 2 nucleotides of DNA out of the RuvA tetramer per ATP hydrolyzed, thus driving DNA branch migration. The RuvB motors rotate together with the DNA substrate, which together with the progressing nucleotide cycle form the mechanistic basis for DNA recombination by continuous HJ branch migration. Branch migration allows RuvC to scan DNA until it finds its consensus sequence, where it cleaves and resolves cruciform DNA. The polypeptide is Holliday junction branch migration complex subunit RuvB (Mycolicibacterium vanbaalenii (strain DSM 7251 / JCM 13017 / BCRC 16820 / KCTC 9966 / NRRL B-24157 / PYR-1) (Mycobacterium vanbaalenii)).